The primary structure comprises 80 residues: Small ribosomal subunit protein bS18 (80 aa).

The protein belongs to the bacterial ribosomal protein bS18 family. In terms of assembly, part of the 30S ribosomal subunit. Forms a tight heterodimer with protein bS6.

Binds as a heterodimer with protein bS6 to the central domain of the 16S rRNA, where it helps stabilize the platform of the 30S subunit. The polypeptide is Small ribosomal subunit protein bS18 (Staphylococcus aureus (strain Mu3 / ATCC 700698)).